We begin with the raw amino-acid sequence, 354 residues long: Glycerol-1-phosphate dehydrogenase [NAD(P)+] (354 aa).

NAD(+) is bound by residues 103 to 107 (GRSVD) and 125 to 128 (TAAS). Position 130 (aspartate 130) interacts with substrate. Serine 134 serves as a coordination point for NAD(+). Aspartate 176 serves as a coordination point for substrate. Positions 176 and 255 each coordinate Zn(2+). Residue histidine 259 participates in substrate binding. Position 271 (histidine 271) interacts with Zn(2+).

The protein belongs to the glycerol-1-phosphate dehydrogenase family. In terms of assembly, homodimer. Zn(2+) serves as cofactor.

It is found in the cytoplasm. It catalyses the reaction sn-glycerol 1-phosphate + NAD(+) = dihydroxyacetone phosphate + NADH + H(+). The enzyme catalyses sn-glycerol 1-phosphate + NADP(+) = dihydroxyacetone phosphate + NADPH + H(+). Its pathway is membrane lipid metabolism; glycerophospholipid metabolism. Catalyzes the NAD(P)H-dependent reduction of dihydroxyacetonephosphate (DHAP or glycerone phosphate) to glycerol 1-phosphate (G1P). The G1P thus generated is used as the glycerophosphate backbone of phospholipids in the cellular membranes of Archaea. This is Glycerol-1-phosphate dehydrogenase [NAD(P)+] from Nitrosopumilus maritimus (strain SCM1).